The chain runs to 371 residues: Capsular polysaccharide phosphotransferase cps12A (371 aa).

It belongs to the stealth family.

Its function is as follows. Part of a capsular polysaccharide synthesis locus. This is Capsular polysaccharide phosphotransferase cps12A (cps12A) from Actinobacillus pleuropneumoniae (Haemophilus pleuropneumoniae).